The sequence spans 196 residues: Small ribosomal subunit protein uS4c (196 aa).

Residues 89 to 150 (MRLDNIVFRL…NQRSKRLVQN (62 aa)) form the S4 RNA-binding domain.

Belongs to the universal ribosomal protein uS4 family. Part of the 30S ribosomal subunit. Contacts protein S5. The interaction surface between S4 and S5 is involved in control of translational fidelity.

It is found in the plastid. Its subcellular location is the chloroplast. Its function is as follows. One of the primary rRNA binding proteins, it binds directly to 16S rRNA where it nucleates assembly of the body of the 30S subunit. In terms of biological role, with S5 and S12 plays an important role in translational accuracy. The sequence is that of Small ribosomal subunit protein uS4c (rps4) from Eleusine indica (Goosegrass).